The primary structure comprises 1194 residues: Chitin synthase C (1194 aa).

Disordered stretches follow at residues 1–91 (MSLP…PNYL) and 136–177 (GAHG…RRKA). Over residues 12–23 (PRREETSAFREP) the composition is skewed to basic and acidic residues. The span at 42-54 (PRHHRHHRSHSSR) shows a compositional bias: basic residues. Basic and acidic residues-rich tracts occupy residues 55–69 (HQHD…EGGI) and 76–85 (VKPERGRMDP). The segment covering 150–164 (TRHRSKKRKGSRKIS) has biased composition (basic residues). Residues 221–241 (IGLISIILMIAAFVGFLTFGF) traverse the membrane as a helical segment. 2 N-linked (GlcNAc...) asparagine glycosylation sites follow: N351 and N390. A helical membrane pass occupies residues 476–496 (YVSLIFILSIVIVKFAFALLF). N-linked (GlcNAc...) asparagine glycosylation is found at N582, N608, N885, and N1014. A run of 3 helical transmembrane segments spans residues 1039-1059 (FVIF…SFTI), 1073-1093 (IIPL…VVVT), and 1097-1117 (LVYV…NFVL).

This sequence belongs to the chitin synthase family. Class V subfamily.

It localises to the cell membrane. The enzyme catalyses [(1-&gt;4)-N-acetyl-beta-D-glucosaminyl](n) + UDP-N-acetyl-alpha-D-glucosamine = [(1-&gt;4)-N-acetyl-beta-D-glucosaminyl](n+1) + UDP + H(+). Polymerizes chitin, a structural polymer of the cell wall and septum, by transferring the sugar moiety of UDP-GlcNAc to the non-reducing end of the growing chitin polymer. Responsible for synthesis of 30-40% of the chitin in the cells. ChsA and chsD play redundant functions in conidia formation. The chitin synthesized by the chsD-encoded isozyme contributes to the rigidity of the walls of germinating conidia, of the subapical region of hyphae, and of conidiophore vesicles, but is not necessary for normal morphology of these cells. The chain is Chitin synthase C from Emericella nidulans (strain FGSC A4 / ATCC 38163 / CBS 112.46 / NRRL 194 / M139) (Aspergillus nidulans).